Here is a 304-residue protein sequence, read N- to C-terminus: Peroxisomal membrane protein 13 (304 aa).

2 disordered regions span residues 1–78 (MASQ…WEQQ) and 258–304 (PRKM…VWGN). Polar residues-rich tracts occupy residues 19-44 (NTSG…SGTA) and 56-67 (RPNTAANMNSLS). Residues 262–279 (QQPPQGPNGLPLPHQPHG) show a composition bias toward low complexity.

Belongs to the peroxin-13 family. As to quaternary structure, interacts with PEX14; forming the PEX13-PEX14 docking complex. Interacts (via N-terminus) with PEX7, but not with PEX5. Interacts with APEM9 (via N-terminus). As to expression, highly expressed in pollen. Detected in shoots, roots, stems, leaves, inflorescences and emasculated postils. Strongly expressed in both male and female gametophytes during fertilization.

It localises to the peroxisome membrane. In terms of biological role, component of the PEX13-PEX14 docking complex, a translocon channel that specifically mediates the import of peroxisomal cargo proteins bound to PEX5 receptor. The PEX13-PEX14 docking complex forms a large import pore which can be opened to a diameter of about 9 nm. Mechanistically, PEX5 receptor along with cargo proteins associates with the PEX14 subunit of the PEX13-PEX14 docking complex in the cytosol, leading to the insertion of the receptor into the organelle membrane with the concomitant translocation of the cargo into the peroxisome matrix. Essential for pollen-tube discharge that take place only in the presence of functional peroxisomes in either the male or the female gametophyte. In Arabidopsis thaliana (Mouse-ear cress), this protein is Peroxisomal membrane protein 13.